We begin with the raw amino-acid sequence, 109 residues long: Nucleoid-associated protein ETA_24730 (109 aa).

It belongs to the YbaB/EbfC family. Homodimer.

It localises to the cytoplasm. The protein resides in the nucleoid. Functionally, binds to DNA and alters its conformation. May be involved in regulation of gene expression, nucleoid organization and DNA protection. This Erwinia tasmaniensis (strain DSM 17950 / CFBP 7177 / CIP 109463 / NCPPB 4357 / Et1/99) protein is Nucleoid-associated protein ETA_24730.